The following is a 156-amino-acid chain: Lipoprotein signal peptidase (156 aa).

The next 2 membrane-spanning stretches (helical) occupy residues 57–77 (LFLI…LFIN) and 83–103 (ILKI…IDRI). Residues Asp110 and Asp129 contribute to the active site. Residues 124-144 (IFNIADVLVSLGTILLIIFII) form a helical membrane-spanning segment.

Belongs to the peptidase A8 family.

Its subcellular location is the cell membrane. The catalysed reaction is Release of signal peptides from bacterial membrane prolipoproteins. Hydrolyzes -Xaa-Yaa-Zaa-|-(S,diacylglyceryl)Cys-, in which Xaa is hydrophobic (preferably Leu), and Yaa (Ala or Ser) and Zaa (Gly or Ala) have small, neutral side chains.. It participates in protein modification; lipoprotein biosynthesis (signal peptide cleavage). Its function is as follows. This protein specifically catalyzes the removal of signal peptides from prolipoproteins. In Clostridium tetani (strain Massachusetts / E88), this protein is Lipoprotein signal peptidase.